The primary structure comprises 311 residues: Methionyl-tRNA formyltransferase (311 aa).

114-117 is a binding site for (6S)-5,6,7,8-tetrahydrofolate; it reads SLLP.

This sequence belongs to the Fmt family.

The catalysed reaction is L-methionyl-tRNA(fMet) + (6R)-10-formyltetrahydrofolate = N-formyl-L-methionyl-tRNA(fMet) + (6S)-5,6,7,8-tetrahydrofolate + H(+). Its function is as follows. Attaches a formyl group to the free amino group of methionyl-tRNA(fMet). The formyl group appears to play a dual role in the initiator identity of N-formylmethionyl-tRNA by promoting its recognition by IF2 and preventing the misappropriation of this tRNA by the elongation apparatus. The polypeptide is Methionyl-tRNA formyltransferase (Corynebacterium diphtheriae (strain ATCC 700971 / NCTC 13129 / Biotype gravis)).